A 287-amino-acid chain; its full sequence is Putative ankyrin repeat protein R791 (287 aa).

ANK repeat units lie at residues 40–71, 76–105, 107–134, 135–164, 165–194, 196–224, and 225–254; these read HNFN…PLVF, NVHD…NIET, NDDV…IDNK, TIFE…DIKA, KDNF…TIDI, DDTY…DYRT, and VDDL…DIEA.

This is Putative ankyrin repeat protein R791 from Acanthamoeba polyphaga (Amoeba).